The primary structure comprises 332 residues: MKVTFEELKGAFYRVLRSRNIAEDTADECAEMFARTTESGVYSHGVNRFPRFIQQLDNGDIIPDAKPQRVTSLGAIEQWDAQRAIGNLTAKKMMDRAIELASDHGIGLVALRNANHWMRGGSYGWQAAEKGYIGICWTNSIAVMPPWGAKECRIGTNPLIVAIPSTPITMVDMSMSMFSYGMLEVNRLAGRELSVDGGFDDNGQLTKEPGVIEKNRRILPMGYWKGSGLSIVLDMIATLLSNGSSVAEVTQENSDEYGVSQIFIAIEVDKLIDGATRDAKLQRIMDFITTAERADDNVAIRLPGHEFTKLLDDNRRHGITIDDSVWAKIQAL.

Histidine 44 acts as the Proton donor in catalysis. NAD(+)-binding positions include 168–174 (ITMVDMS), 224–225 (WK), and 304–306 (GHE).

This sequence belongs to the LDH2/MDH2 oxidoreductase family. DlgD subfamily. In terms of assembly, homodimer.

The protein resides in the cytoplasm. It catalyses the reaction 3-dehydro-L-gulonate + NAD(+) = 2,3-dioxo-L-gulonate + NADH + H(+). It carries out the reaction 3-dehydro-L-gulonate + NADP(+) = 2,3-dioxo-L-gulonate + NADPH + H(+). Catalyzes the reduction of 2,3-diketo-L-gulonate in the presence of NADH, to form 3-keto-L-gulonate. The polypeptide is 2,3-diketo-L-gulonate reductase (Salmonella paratyphi C (strain RKS4594)).